Here is a 434-residue protein sequence, read N- to C-terminus: MYKNQLQELAQRSCFNLPSYTCIREGPDHAPRFKATVNFNGEIFESPQYCSTLRQAEHSAAEVALNALSNRGPSHSLAARILDETGVYKNLLQEIAQRVGAPLPRYTTFRSGLGHQPVFTGTVELAGITFTGDPAKNKKQAEKNAAMAAWSSLKQLAKETSSSMPEPENIDELEQVIIARALINYRIKENIGTGSSSSAPVPFAKKFFMQNLRPTSPQPSPATTSRILPFICPKQPSRSSRSSLAATSGIDRIMAAALESRSYQRPQQRFANPPYVPMRQFRSQCHGMAPPVTIRTAVPVFSAPPMPPPPCTNNTQLPSSVYVPSLMRTAPPVRIAPPVTIRTAVPVFASAPPVRIRTAVKPTVEAGETRISSVQEKESIPVLPDSLEIGVEGSTITITDCEKTASKETERAEFKDSSKGEPETARERLENLKI.

DRBM domains lie at 1–70 (MYKN…ALSN) and 87–155 (VYKN…SLKQ). Residues 402–434 (EKTASKETERAEFKDSSKGEPETARERLENLKI) form a disordered region.

In terms of assembly, heterodimer with DRB1 or DRB5. Interacts with DCL1 and DCL5.

It is found in the cytoplasm. Functionally, binds double-stranded RNA. May be involved in RNA-mediated silencing. This Arabidopsis thaliana (Mouse-ear cress) protein is Double-stranded RNA-binding protein 2 (DRB2).